We begin with the raw amino-acid sequence, 859 residues long: Kinesin-like protein KIN-14T (859 aa).

The Kinesin motor domain maps to 91–411 (NIRVFCRVKP…LNFATRAKNI (321 aa)). 168–175 (GQTGTGKT) provides a ligand contact to ATP. Positions 422 to 463 (QAKKEAVMMNLQKMMEKIEQEREMSLRKMRNLNETLEKLTGK) form a coiled coil. The tract at residues 511–530 (LSGADFSVTPNSSSFKSRRN) is disordered. Residues 518 to 530 (VTPNSSSFKSRRN) show a composition bias toward polar residues.

This sequence belongs to the TRAFAC class myosin-kinesin ATPase superfamily. Kinesin family. KIN-14 subfamily.

This Arabidopsis thaliana (Mouse-ear cress) protein is Kinesin-like protein KIN-14T.